The primary structure comprises 283 residues: Putative replication protein XF_b0001 (283 aa).

This chain is Putative replication protein XF_b0001, found in Xylella fastidiosa (strain 9a5c).